The chain runs to 619 residues: MGKIKKRATSGNAKNFITRTQAIKKLQVSLADFRRLCIFKGIYPREPRNKKKANKGSTAPVTFYYAKDIHYLLHEPVLDKFRQHKTFAKKLQRALGKGEISSAAKLDANRPKYTLNHIIKERYPTFLDALRDLDDPLNMLFLFSNMPAIDKVSTKIIADAEKLCNYWLAYVSKERLLKKMFVSIKGVYYQATIKGQEVRWLIPYKFPTNIPTDVDFRIMLTFLEFYSTLLNFVLYKLYNESGLIYPPHIDIAKLKAAGGLSSYVLQSKDGKNVAILQKKQDDAGSNVEGKELSSAELKKAIKADKDQKDQDTIEDAEEVTEPTVEETELDEFQNGTTNNAVDTLVQPSQFSSPTSQLFSKFIFFIGREVPLDILEFVILSCGGKVISEISLDDLKLNDPKLYASLDLNSITHQISDRKKILQKVPGRTYIQPQWVFDSINKGELVSVGDYAPGETLPPHLSPWGDAGGYDPNAKAQVTAEAEEEEEEEEEDEEEEEEEEEIEVADGDEDQDDEEEEEIEDEDLKAQKELEMEVAGKKFSELQNAEEGSKQKKQKKNASTKAALTPEEEAKELAKIMMTNKQKKLYKKMQYGIEKKTNRVDELTKKRKQLEKKKKQLKDV.

Residues 303–324 (ADKDQKDQDTIEDAEEVTEPTV) form a disordered region. The span at 312–324 (TIEDAEEVTEPTV) shows a compositional bias: acidic residues. In terms of domain architecture, BRCT spans 353–452 (PTSQLFSKFI…ELVSVGDYAP (100 aa)). A disordered region spans residues 456 to 567 (LPPHLSPWGD…STKAALTPEE (112 aa)). Coiled-coil stretches lie at residues 472-560 (NAKA…ASTK) and 588-619 (MQYG…LKDV). Acidic residues predominate over residues 480 to 522 (EAEEEEEEEEEDEEEEEEEEEIEVADGDEDQDDEEEEEIEDED). Residues 523-539 (LKAQKELEMEVAGKKFS) show a composition bias toward basic and acidic residues.

Belongs to the pescadillo family. In terms of assembly, component of the NOP7 complex, composed of ERB1, NOP7 and YTM1. The complex is held together by ERB1, which interacts with NOP7 via its N-terminal domain and with YTM1 via a high-affinity interaction between the seven-bladed beta-propeller domains of the 2 proteins. The NOP7 complex associates with the 66S pre-ribosome.

It is found in the nucleus. Its subcellular location is the nucleolus. It localises to the nucleoplasm. In terms of biological role, component of the NOP7 complex, which is required for maturation of the 25S and 5.8S ribosomal RNAs and formation of the 60S ribosome. This Lodderomyces elongisporus (strain ATCC 11503 / CBS 2605 / JCM 1781 / NBRC 1676 / NRRL YB-4239) (Yeast) protein is Pescadillo homolog.